A 145-amino-acid polypeptide reads, in one-letter code: D-aminoacyl-tRNA deacylase (145 aa).

A Gly-cisPro motif, important for rejection of L-amino acids motif is present at residues 137–138 (GP).

It belongs to the DTD family. Homodimer.

Its subcellular location is the cytoplasm. The enzyme catalyses glycyl-tRNA(Ala) + H2O = tRNA(Ala) + glycine + H(+). It carries out the reaction a D-aminoacyl-tRNA + H2O = a tRNA + a D-alpha-amino acid + H(+). An aminoacyl-tRNA editing enzyme that deacylates mischarged D-aminoacyl-tRNAs. Also deacylates mischarged glycyl-tRNA(Ala), protecting cells against glycine mischarging by AlaRS. Acts via tRNA-based rather than protein-based catalysis; rejects L-amino acids rather than detecting D-amino acids in the active site. By recycling D-aminoacyl-tRNA to D-amino acids and free tRNA molecules, this enzyme counteracts the toxicity associated with the formation of D-aminoacyl-tRNA entities in vivo and helps enforce protein L-homochirality. The protein is D-aminoacyl-tRNA deacylase of Shewanella oneidensis (strain ATCC 700550 / JCM 31522 / CIP 106686 / LMG 19005 / NCIMB 14063 / MR-1).